A 30-amino-acid chain; its full sequence is Unknown protein from spot 365 of 2D-PAGE of etiolated coleoptile (30 aa).

The protein belongs to the zinc-containing alcohol dehydrogenase family.

This Zea mays (Maize) protein is Unknown protein from spot 365 of 2D-PAGE of etiolated coleoptile.